The chain runs to 500 residues: Probable cytosol aminopeptidase (500 aa).

2 residues coordinate Mn(2+): K265 and D270. Residue K277 is part of the active site. Mn(2+)-binding residues include D288, D347, and E349. The active site involves R351.

This sequence belongs to the peptidase M17 family. Mn(2+) serves as cofactor.

The protein localises to the cytoplasm. The catalysed reaction is Release of an N-terminal amino acid, Xaa-|-Yaa-, in which Xaa is preferably Leu, but may be other amino acids including Pro although not Arg or Lys, and Yaa may be Pro. Amino acid amides and methyl esters are also readily hydrolyzed, but rates on arylamides are exceedingly low.. The enzyme catalyses Release of an N-terminal amino acid, preferentially leucine, but not glutamic or aspartic acids.. Presumably involved in the processing and regular turnover of intracellular proteins. Catalyzes the removal of unsubstituted N-terminal amino acids from various peptides. This Rickettsia felis (strain ATCC VR-1525 / URRWXCal2) (Rickettsia azadi) protein is Probable cytosol aminopeptidase.